Here is a 282-residue protein sequence, read N- to C-terminus: Adenosylcobinamide-GDP ribazoletransferase (282 aa).

The next 6 helical transmembrane spans lie at 47-67 (GVGI…QALL), 72-92 (FTPL…TGGF), 124-144 (AFGA…LAML), 167-187 (AALL…IWLL), 208-228 (GSLL…GLAL), and 231-251 (ISLI…GALF).

The protein belongs to the CobS family. It depends on Mg(2+) as a cofactor.

The protein localises to the cell inner membrane. The catalysed reaction is alpha-ribazole + adenosylcob(III)inamide-GDP = adenosylcob(III)alamin + GMP + H(+). The enzyme catalyses alpha-ribazole 5'-phosphate + adenosylcob(III)inamide-GDP = adenosylcob(III)alamin 5'-phosphate + GMP + H(+). Its pathway is cofactor biosynthesis; adenosylcobalamin biosynthesis; adenosylcobalamin from cob(II)yrinate a,c-diamide: step 7/7. In terms of biological role, joins adenosylcobinamide-GDP and alpha-ribazole to generate adenosylcobalamin (Ado-cobalamin). Also synthesizes adenosylcobalamin 5'-phosphate from adenosylcobinamide-GDP and alpha-ribazole 5'-phosphate. This chain is Adenosylcobinamide-GDP ribazoletransferase, found in Polaromonas sp. (strain JS666 / ATCC BAA-500).